We begin with the raw amino-acid sequence, 500 residues long: L-arabinose isomerase (500 aa).

Residues Glu-306, Glu-333, His-350, and His-450 each contribute to the Mn(2+) site.

This sequence belongs to the arabinose isomerase family. Homohexamer. The cofactor is Mn(2+).

The enzyme catalyses beta-L-arabinopyranose = L-ribulose. It participates in carbohydrate degradation; L-arabinose degradation via L-ribulose; D-xylulose 5-phosphate from L-arabinose (bacterial route): step 1/3. Its function is as follows. Catalyzes the conversion of L-arabinose to L-ribulose. The sequence is that of L-arabinose isomerase from Salmonella arizonae (strain ATCC BAA-731 / CDC346-86 / RSK2980).